The chain runs to 449 residues: 1H-pyrrole-2-carbonyl-[peptidyl-carrier protein] chlorinase (449 aa).

FAD-binding residues include A16, E35, R41, H43, V44, S47, R123, I147, and D316. Positions 327 and 328 each coordinate chloride. V329 contributes to the FAD binding site.

This sequence belongs to the flavin-dependent halogenase family. Homodimer.

It carries out the reaction (1H-pyrrole-2-carbonyl)-[peptidyl-carrier protein] + 2 FADH2 + 2 chloride + 2 O2 = (4,5-dichloro-1H-pyrrole-2-carbonyl)-[peptidyl-carrier protein] + 2 FAD + 4 H2O. It catalyses the reaction (1H-pyrrole-2-carbonyl)-[peptidyl-carrier protein] + FADH2 + chloride + O2 = (5-chloro-1H-pyrrole-2-carbonyl)-[peptidyl-carrier protein] + FAD + 2 H2O. The catalysed reaction is (5-chloro-1H-pyrrole-2-carbonyl)-[peptidyl-carrier protein] + FADH2 + chloride + O2 = (4,5-dichloro-1H-pyrrole-2-carbonyl)-[peptidyl-carrier protein] + FAD + 2 H2O. It participates in antibiotic biosynthesis. Functionally, involved in the biosynthesis of the antibiotic pyoluteorin. Catalyzes the dichlorination of the pyrrole ring of pyrrolyl-S-PltL, generating the 5-chloropyrrolyl-S-PltL intermediate and then the 4,5-dichloropyrrolyl-S-PltL product. This is 1H-pyrrole-2-carbonyl-[peptidyl-carrier protein] chlorinase from Pseudomonas fluorescens (strain ATCC BAA-477 / NRRL B-23932 / Pf-5).